Consider the following 293-residue polypeptide: Immediate early response gene 5-like protein (293 aa).

It belongs to the IER family.

In Xenopus laevis (African clawed frog), this protein is Immediate early response gene 5-like protein (ier5l).